A 180-amino-acid polypeptide reads, in one-letter code: MVNRLKEKYDNEIVPSLMEKFNYTSIMQAPKVDKIVINMGVGDAVSNAKRLDEAVDELTLIAGQKPVITKAKKSIAGFRLREGMAIGAKVTLRGQRMYEFLDKLVSVSLPRVRDFHGVSKRAFDGRGNYTLGIREQLIFPEIDFDDVNKVRGMDIVIVTTANTDEESRELLTQLGMPFAK.

This sequence belongs to the universal ribosomal protein uL5 family. Part of the 50S ribosomal subunit; part of the 5S rRNA/L5/L18/L25 subcomplex. Contacts the 5S rRNA and the P site tRNA. Forms a bridge to the 30S subunit in the 70S ribosome.

This is one of the proteins that bind and probably mediate the attachment of the 5S RNA into the large ribosomal subunit, where it forms part of the central protuberance. In the 70S ribosome it contacts protein S13 of the 30S subunit (bridge B1b), connecting the 2 subunits; this bridge is implicated in subunit movement. Contacts the P site tRNA; the 5S rRNA and some of its associated proteins might help stabilize positioning of ribosome-bound tRNAs. The polypeptide is Large ribosomal subunit protein uL5 (Ligilactobacillus salivarius (strain UCC118) (Lactobacillus salivarius)).